The primary structure comprises 150 residues: Propanediol utilization protein PduV (150 aa).

The tract at residues 1-42 is targets protein to the BMC; it reads MKRIMLIGPSQCGKTSLTQCMRGEALHYQKTQAIVWSPTTID. Residue 8 to 15 participates in GTP binding; that stretch reads GPSQCGKT.

Belongs to the EutP/PduV family. In terms of assembly, interacts with PduU, probably via the PduU beta-barrel which is predicted by modeling to be on the exterior of the BMC.

The protein localises to the bacterial microcompartment. It participates in polyol metabolism; 1,2-propanediol degradation. Its function is as follows. May play a role in the spatial distribution of the bacterial microcompartment (BMC) dedicated to 1,2-PD degradation, perhaps being involved in cytoskeleton dynamics; might bind GTP. This subunit is directly targeted to the BMC. In terms of biological role, expression of a cosmid containing the full 21-gene pdu operon in E.coli allows E.coli to grow on 1,2-propanediol (1,2-PD) with the appearance of bacterial microcompartments (BMC) in its cytoplasm. The 1,2-PD-specific bacterial microcompartment (BMC) concentrates low levels of 1,2-PD catabolic enzymes, concentrates volatile reaction intermediates thus enhancing pathway flux and keeps the level of toxic, mutagenic propionaldehyde low. The protein is Propanediol utilization protein PduV of Citrobacter freundii.